The sequence spans 337 residues: Acetyl-coenzyme A synthetase (337 aa).

CoA-binding positions include 131-134, threonine 249, and asparagine 273; that span reads RGGR. Position 325–327 (325–327) interacts with ATP; the sequence is GEP.

The protein belongs to the ATP-dependent AMP-binding enzyme family. It depends on Mg(2+) as a cofactor. In terms of processing, acetylated. Deacetylation by the SIR2-homolog deacetylase activates the enzyme.

The catalysed reaction is acetate + ATP + CoA = acetyl-CoA + AMP + diphosphate. In terms of biological role, catalyzes the conversion of acetate into acetyl-CoA (AcCoA), an essential intermediate at the junction of anabolic and catabolic pathways. AcsA undergoes a two-step reaction. In the first half reaction, AcsA combines acetate with ATP to form acetyl-adenylate (AcAMP) intermediate. In the second half reaction, it can then transfer the acetyl group from AcAMP to the sulfhydryl group of CoA, forming the product AcCoA. In Nostoc linckia, this protein is Acetyl-coenzyme A synthetase (acsA).